Consider the following 353-residue polypeptide: S-adenosylmethionine:tRNA ribosyltransferase-isomerase (353 aa).

It belongs to the QueA family. In terms of assembly, monomer.

The protein resides in the cytoplasm. It catalyses the reaction 7-aminomethyl-7-carbaguanosine(34) in tRNA + S-adenosyl-L-methionine = epoxyqueuosine(34) in tRNA + adenine + L-methionine + 2 H(+). It functions in the pathway tRNA modification; tRNA-queuosine biosynthesis. Functionally, transfers and isomerizes the ribose moiety from AdoMet to the 7-aminomethyl group of 7-deazaguanine (preQ1-tRNA) to give epoxyqueuosine (oQ-tRNA). The sequence is that of S-adenosylmethionine:tRNA ribosyltransferase-isomerase from Sodalis glossinidius (strain morsitans).